A 667-amino-acid polypeptide reads, in one-letter code: Holliday junction recognition protein (667 aa).

The tract at residues 78–126 (LNGQAPEGDSESSGADTSLEENWPSCSSAMREASGDPRQRQPAVPGNTL) is disordered. A phosphoserine mark is found at serine 169, serine 185, and serine 195. Disordered stretches follow at residues 181–201 (ISAK…GQGP) and 279–317 (RRRP…EPGK). The span at 279-297 (RRRPSRKQGLHKNRTHCPR) shows a compositional bias: basic residues. Serine 388, serine 424, serine 449, and serine 462 each carry phosphoserine. Positions 443–530 (YRSGSKSPGS…NSEPTGKAVW (88 aa)) are disordered. The segment covering 466 to 482 (GREKTERPGEALEDLRG) has biased composition (basic and acidic residues). Over residues 496–515 (SCPSPEGSPSRSPSHSQLSS) the composition is skewed to low complexity. Lysine 554 participates in a covalent cross-link: Glycyl lysine isopeptide (Lys-Gly) (interchain with G-Cter in SUMO2). Serine 567 carries the post-translational modification Phosphoserine. Positions 596–617 (KRLNPDSPQQSSQKRSISPGCH) are disordered. The span at 601–611 (DSPQQSSQKRS) shows a compositional bias: polar residues. Serine 613 bears the Phosphoserine mark.

In terms of assembly, interacts with CENPA (via CATD domain); the interaction is direct and specific for CENPA since it does not interact with H3.1- or H3.3-containing nucleosomes. Heterotrimer composed of HJURP, CENPA and histone H4, where HJURP interacts with the dimer formed by CENPA and histone H4 and prevents tetramerization of CENPA and H4. Identified in a centromere complex containing histones H2A, H2B and H4, and at least CENPA, CENPB, CENPC, CENPT, CENPN, HJURP, SUPT16H, SSRP1 and RSF1. Interacts with 14-3-3 family members in a phosphorylation-dependent manner. Interacts with MSH5 and NBN.

It localises to the nucleus. Its subcellular location is the nucleolus. It is found in the chromosome. The protein resides in the centromere. Functionally, centromeric protein that plays a central role in the incorporation and maintenance of histone H3-like variant CENPA at centromeres. Acts as a specific chaperone for CENPA and is required for the incorporation of newly synthesized CENPA molecules into nucleosomes at replicated centromeres. Prevents CENPA-H4 tetramerization and prevents premature DNA binding by the CENPA-H4 tetramer. Directly binds Holliday junctions. This chain is Holliday junction recognition protein (Hjurp), found in Mus musculus (Mouse).